A 502-amino-acid polypeptide reads, in one-letter code: NAD(P)H-quinone oxidoreductase chain 4, chloroplastic (502 aa).

Helical transmembrane passes span 4–24 (YPWLTIIVLLPIPAGLLIPLL), 39–59 (LGICLLEFLLITHTFCYHFDI), 89–109 (IGLTPLTGFVTTLATLAAWPV), 115–132 (LFHSSMLAMYSGQVGLFT), 136–156 (ILLFFLMWELELIPVYLLLSM), 169–189 (FILYTAGGSIPLLIGALTMGL), 209–229 (IALEIVLYLSFFVAYAVKLPI), 244–264 (HYSTCMLLAGILLKMGGYGLI), 276–296 (SIFAPWLVIVGAFQIVYAASI), 315–335 (MGFVLIGIGSATNIGLNGAIL), 387–407 (SLALPGTSGFAAESMVFPGIV), 418–438 (IIITIVEAIGIILTPIYLLSM), and 466–486 (IFISICLLLPTIGIGLYPNLI).

Belongs to the complex I subunit 4 family.

The protein localises to the plastid. It is found in the chloroplast thylakoid membrane. The enzyme catalyses a plastoquinone + NADH + (n+1) H(+)(in) = a plastoquinol + NAD(+) + n H(+)(out). It carries out the reaction a plastoquinone + NADPH + (n+1) H(+)(in) = a plastoquinol + NADP(+) + n H(+)(out). The sequence is that of NAD(P)H-quinone oxidoreductase chain 4, chloroplastic from Huperzia lucidula (Shining clubmoss).